A 64-amino-acid polypeptide reads, in one-letter code: Large ribosomal subunit protein bL33c (64 aa).

The protein belongs to the bacterial ribosomal protein bL33 family.

It is found in the plastid. The protein localises to the chloroplast. This Cyanidium caldarium (Red alga) protein is Large ribosomal subunit protein bL33c (rpl33).